A 108-amino-acid chain; its full sequence is UPF0060 membrane protein amb3269 (108 aa).

Helical transmembrane passes span 4-24, 31-51, 59-79, and 85-105; these read IPTY…FWAW, PLWL…LTRI, AYAA…WAVE, and RWDT…IFGP.

The protein belongs to the UPF0060 family.

Its subcellular location is the cell inner membrane. The sequence is that of UPF0060 membrane protein amb3269 from Paramagnetospirillum magneticum (strain ATCC 700264 / AMB-1) (Magnetospirillum magneticum).